We begin with the raw amino-acid sequence, 354 residues long: Tryptophan--tRNA ligase (354 aa).

ATP is bound by residues 13-15 (QPT) and 21-22 (GN). The short motif at 14–22 (PTGNLHLGN) is the 'HIGH' region element. Aspartate 137 is an L-tryptophan binding site. Residues 149–151 (GDD), valine 208, and 217–221 (KMSKS) contribute to the ATP site. The short motif at 217 to 221 (KMSKS) is the 'KMSKS' region element.

It belongs to the class-I aminoacyl-tRNA synthetase family. Homodimer.

The protein resides in the cytoplasm. The catalysed reaction is tRNA(Trp) + L-tryptophan + ATP = L-tryptophyl-tRNA(Trp) + AMP + diphosphate + H(+). In terms of biological role, catalyzes the attachment of tryptophan to tRNA(Trp). This chain is Tryptophan--tRNA ligase, found in Agrobacterium fabrum (strain C58 / ATCC 33970) (Agrobacterium tumefaciens (strain C58)).